Reading from the N-terminus, the 333-residue chain is Adenosine deaminase (333 aa).

The Zn(2+) site is built by histidine 12 and histidine 14. 3 residues coordinate substrate: histidine 14, aspartate 16, and glycine 170. Residue histidine 197 participates in Zn(2+) binding. The active-site Proton donor is the glutamate 200. Aspartate 278 is a binding site for Zn(2+). Aspartate 279 is a binding site for substrate.

Belongs to the metallo-dependent hydrolases superfamily. Adenosine and AMP deaminases family. Adenosine deaminase subfamily. Zn(2+) is required as a cofactor.

It catalyses the reaction adenosine + H2O + H(+) = inosine + NH4(+). It carries out the reaction 2'-deoxyadenosine + H2O + H(+) = 2'-deoxyinosine + NH4(+). Its function is as follows. Catalyzes the hydrolytic deamination of adenosine and 2-deoxyadenosine. The sequence is that of Adenosine deaminase from Edwardsiella ictaluri (strain 93-146).